The following is a 247-amino-acid chain: MSKQPDRLFSQPLEQVPDFVFNEDVVRVFPDMIKRSVPGYPTIVENLGVLAARFAQPGTALYDLGASLGAVTQSLRRHVRSDGCRVIAVDNSAAMVERCRQYLTAQDSMFQELLPVQVLEADILALPFEPASVVAMNFTLQFIAPDQRLELLGRIRQALLPGGALILSEKLRFADEQEQDLLNELHLDFKRANGYSELEIAQKRSAIENVMKPDTLETHQERLRAAGFSKVVPWFQCLNFASLIALP.

Residues Tyr-40, Gly-65–Ser-67, Asp-90–Asn-91, Asp-122–Ile-123, Asn-137, and Arg-204 each bind S-adenosyl-L-methionine.

Belongs to the class I-like SAM-binding methyltransferase superfamily. Cx-SAM synthase family. Homodimer.

It carries out the reaction prephenate + S-adenosyl-L-methionine = carboxy-S-adenosyl-L-methionine + 3-phenylpyruvate + H2O. Functionally, catalyzes the conversion of S-adenosyl-L-methionine (SAM) to carboxy-S-adenosyl-L-methionine (Cx-SAM). In Pseudomonas putida (strain ATCC 47054 / DSM 6125 / CFBP 8728 / NCIMB 11950 / KT2440), this protein is Carboxy-S-adenosyl-L-methionine synthase.